We begin with the raw amino-acid sequence, 78 residues long: MICOS complex subunit MIC10 (78 aa).

Ser-2 is subject to N-acetylserine. The helical transmembrane segment at 17-36 (AVVKIGTGFGLGIVFSLTFF) threads the bilayer. Residues 37-78 (KRRMWPLAFGSGMGLGMAYSNCQHDFQAPYLLHGKYVKEQEQ) are Mitochondrial intermembrane-facing.

This sequence belongs to the MICOS complex subunit Mic10 family. Component of the mitochondrial contact site and cristae organizing system (MICOS) complex, composed of at least MICOS10/MIC10, CHCHD3/MIC19, CHCHD6/MIC25, APOOL/MIC27, IMMT/MIC60, APOO/MIC23/MIC26 and MICOS13/MIC13. This complex was also known under the names MINOS or MitOS complex. The MICOS complex associates with mitochondrial outer membrane proteins SAMM50, MTX1 and MTX2 (together described as components of the mitochondrial outer membrane sorting assembly machinery (SAM) complex) and DNAJC11, mitochondrial inner membrane protein TMEM11 and with HSPA9. The MICOS and SAM complexes together with DNAJC11 are part of a large protein complex spanning both membranes termed the mitochondrial intermembrane space bridging (MIB) complex. Interacts with IMMT/MIC60 and MICOS13/MIC13. Interacts with APOO/MIC23/MIC26 and APOOL/MIC27. Interacts with ARMC1.

The protein localises to the mitochondrion inner membrane. Component of the MICOS complex, a large protein complex of the mitochondrial inner membrane that plays crucial roles in the maintenance of crista junctions, inner membrane architecture, and formation of contact sites to the outer membrane. This is MICOS complex subunit MIC10 from Homo sapiens (Human).